Consider the following 418-residue polypeptide: UDP-N-acetylglucosamine 1-carboxyvinyltransferase (418 aa).

22–23 (KN) contacts phosphoenolpyruvate. R92 lines the UDP-N-acetyl-alpha-D-glucosamine pocket. C116 acts as the Proton donor in catalysis. C116 is modified (2-(S-cysteinyl)pyruvic acid O-phosphothioketal). D305 and V327 together coordinate UDP-N-acetyl-alpha-D-glucosamine.

This sequence belongs to the EPSP synthase family. MurA subfamily.

It localises to the cytoplasm. It catalyses the reaction phosphoenolpyruvate + UDP-N-acetyl-alpha-D-glucosamine = UDP-N-acetyl-3-O-(1-carboxyvinyl)-alpha-D-glucosamine + phosphate. Its pathway is cell wall biogenesis; peptidoglycan biosynthesis. Cell wall formation. Adds enolpyruvyl to UDP-N-acetylglucosamine. This is UDP-N-acetylglucosamine 1-carboxyvinyltransferase from Endomicrobium trichonymphae.